The chain runs to 436 residues: Trigger factor (436 aa).

The region spanning 163–248 (GDRVTLDFAG…VKEVAEGVLP (86 aa)) is the PPIase FKBP-type domain.

Belongs to the FKBP-type PPIase family. Tig subfamily.

It is found in the cytoplasm. The catalysed reaction is [protein]-peptidylproline (omega=180) = [protein]-peptidylproline (omega=0). Functionally, involved in protein export. Acts as a chaperone by maintaining the newly synthesized protein in an open conformation. Functions as a peptidyl-prolyl cis-trans isomerase. This Bordetella petrii (strain ATCC BAA-461 / DSM 12804 / CCUG 43448) protein is Trigger factor.